The primary structure comprises 468 residues: Pentatricopeptide repeat-containing protein At5g46680 (468 aa).

12 PPR repeats span residues 12–46 (STKL…GVLP), 47–81 (DVIT…GIEP), 82–116 (DVTT…GLSP), 117–152 (DMWS…GLVP), 153–183 (GIDT…LKSR), 187–221 (ELMT…GYTP), 222–256 (NAVT…GYTF), 257–291 (DGFA…GTRS), 293–327 (DIVS…GLKP), 328–362 (DDYT…GMQP), 363–393 (SVVT…MEVR), and 394–428 (DEFT…GMKI).

Belongs to the PPR family. P subfamily.

In Arabidopsis thaliana (Mouse-ear cress), this protein is Pentatricopeptide repeat-containing protein At5g46680.